Reading from the N-terminus, the 334-residue chain is Glycerol-1-phosphate dehydrogenase [NAD(P)+] (334 aa).

NAD(+)-binding positions include 77–81 and 99–102; these read GKPID and TTAS. Substrate is bound at residue Asp-104. NAD(+) is bound at residue Ser-108. A substrate-binding site is contributed by Asp-147. Zn(2+)-binding residues include Asp-147 and His-225. His-229 contributes to the substrate binding site. His-246 contacts Zn(2+).

This sequence belongs to the glycerol-1-phosphate dehydrogenase family. Zn(2+) is required as a cofactor.

It is found in the cytoplasm. It catalyses the reaction sn-glycerol 1-phosphate + NAD(+) = dihydroxyacetone phosphate + NADH + H(+). The enzyme catalyses sn-glycerol 1-phosphate + NADP(+) = dihydroxyacetone phosphate + NADPH + H(+). Its pathway is membrane lipid metabolism; glycerophospholipid metabolism. In terms of biological role, catalyzes the NAD(P)H-dependent reduction of dihydroxyacetonephosphate (DHAP or glycerone phosphate) to glycerol 1-phosphate (G1P). The G1P thus generated is used as the glycerophosphate backbone of phospholipids in the cellular membranes of Archaea. In Methanococcus vannielii (strain ATCC 35089 / DSM 1224 / JCM 13029 / OCM 148 / SB), this protein is Glycerol-1-phosphate dehydrogenase [NAD(P)+].